A 476-amino-acid chain; its full sequence is Phosphomethylpyrimidine synthase (476 aa).

The segment at Met-1–Asp-27 is disordered. The span at His-7–Asp-27 shows a compositional bias: basic and acidic residues. Residues Asn-67, Met-96, Tyr-125, His-160, Ser-180–Gly-182, Asp-221–Arg-224, and Glu-260 each bind substrate. His-264 contributes to the Zn(2+) binding site. Tyr-287 contributes to the substrate binding site. His-328 is a Zn(2+) binding site. Residues Cys-408, Cys-411, and Cys-416 each contribute to the [4Fe-4S] cluster site. The interval Arg-425–Asp-476 is disordered. The segment covering Glu-436 to Ala-447 has biased composition (low complexity).

The protein belongs to the ThiC family. The cofactor is [4Fe-4S] cluster.

It catalyses the reaction 5-amino-1-(5-phospho-beta-D-ribosyl)imidazole + S-adenosyl-L-methionine = 4-amino-2-methyl-5-(phosphooxymethyl)pyrimidine + CO + 5'-deoxyadenosine + formate + L-methionine + 3 H(+). It functions in the pathway cofactor biosynthesis; thiamine diphosphate biosynthesis. In terms of biological role, catalyzes the synthesis of the hydroxymethylpyrimidine phosphate (HMP-P) moiety of thiamine from aminoimidazole ribotide (AIR) in a radical S-adenosyl-L-methionine (SAM)-dependent reaction. The protein is Phosphomethylpyrimidine synthase of Halobacterium salinarum (strain ATCC 29341 / DSM 671 / R1).